Here is a 131-residue protein sequence, read N- to C-terminus: Large-conductance mechanosensitive channel (131 aa).

A run of 3 helical transmembrane segments spans residues 8-28, 30-50, and 72-92; these read FALK…GAFG, IVTS…VGGI, and GQFI…FMFI.

It belongs to the MscL family. In terms of assembly, homopentamer.

It is found in the cell membrane. Channel that opens in response to stretch forces in the membrane lipid bilayer. May participate in the regulation of osmotic pressure changes within the cell. This Alkaliphilus oremlandii (strain OhILAs) (Clostridium oremlandii (strain OhILAs)) protein is Large-conductance mechanosensitive channel.